The sequence spans 379 residues: Dihydroflavonol 4-reductase (379 aa).

Residues Lys-56 and Tyr-175 each coordinate NADP(+).

This sequence belongs to the NAD(P)-dependent epimerase/dehydratase family. Dihydroflavonol-4-reductase subfamily. In terms of tissue distribution, expressed in both leaf and hypocotyl tissues.

It catalyses the reaction a (2R,3S,4S)-leucoanthocyanidin + NADP(+) = a (2R,3R)-dihydroflavonol + NADPH + H(+). It carries out the reaction (2S)-flavan-4-ol + NADP(+) = (2S)-flavanone + NADPH + H(+). It participates in pigment biosynthesis; anthocyanin biosynthesis. Bifunctional enzyme involved in flavonoid metabolism. In Solanum lycopersicum (Tomato), this protein is Dihydroflavonol 4-reductase.